The chain runs to 166 residues: MSKAIENKQVQVQEITEKFQNASSVVVVDYRGLNVAQVTELRKQLREAGVEFKVYKNTLTRRAAEAAGLEGINDVLVGPNAIAFSNEDVVAPAKIINEFAKKNEALEIKAGIIEGTISSVEDVKALAELPSREGLLSMLLSVLQAPVRNFALATKAVADQKEEQGA.

Belongs to the universal ribosomal protein uL10 family. As to quaternary structure, part of the ribosomal stalk of the 50S ribosomal subunit. The N-terminus interacts with L11 and the large rRNA to form the base of the stalk. The C-terminus forms an elongated spine to which L12 dimers bind in a sequential fashion forming a multimeric L10(L12)X complex.

In terms of biological role, forms part of the ribosomal stalk, playing a central role in the interaction of the ribosome with GTP-bound translation factors. In Lysinibacillus sphaericus (strain C3-41), this protein is Large ribosomal subunit protein uL10.